A 167-amino-acid polypeptide reads, in one-letter code: Lipoprotein signal peptidase (167 aa).

4 consecutive transmembrane segments (helical) span residues 5–25, 42–62, 70–90, and 102–122; these read ICST…LDLG, LIPY…SFLA, WFFA…MYRA, and ALII…GFVI. Active-site residues include Asp-123 and Asp-141. A helical membrane pass occupies residues 137-157; that stretch reads FNIADMAICIGAGLVIIDSFL.

This sequence belongs to the peptidase A8 family.

It localises to the cell inner membrane. It carries out the reaction Release of signal peptides from bacterial membrane prolipoproteins. Hydrolyzes -Xaa-Yaa-Zaa-|-(S,diacylglyceryl)Cys-, in which Xaa is hydrophobic (preferably Leu), and Yaa (Ala or Ser) and Zaa (Gly or Ala) have small, neutral side chains.. It participates in protein modification; lipoprotein biosynthesis (signal peptide cleavage). This protein specifically catalyzes the removal of signal peptides from prolipoproteins. The chain is Lipoprotein signal peptidase from Photorhabdus laumondii subsp. laumondii (strain DSM 15139 / CIP 105565 / TT01) (Photorhabdus luminescens subsp. laumondii).